Here is a 227-residue protein sequence, read N- to C-terminus: Cytochrome c oxidase subunit 2 (227 aa).

At 1-14 the chain is on the mitochondrial intermembrane side; it reads MACPVQLGFQDAAS. Residues 15-45 traverse the membrane as a helical segment; sequence PIMEELTYFHDHTLMIVFLISSLVLYIISLM. The Mitochondrial matrix segment spans residues 46–59; sequence LTTELTHTSTMDAQ. A helical membrane pass occupies residues 60 to 87; that stretch reads EVETVWTILPAVILILIALPSLRILYMM. The Mitochondrial intermembrane segment spans residues 88–227; that stretch reads DEITTPSLTL…HFEEWLLAML (140 aa). Positions 161, 196, 198, 200, 204, and 207 each coordinate Cu cation. Position 198 (Glu198) interacts with Mg(2+).

Belongs to the cytochrome c oxidase subunit 2 family. Component of the cytochrome c oxidase (complex IV, CIV), a multisubunit enzyme composed of 14 subunits. The complex is composed of a catalytic core of 3 subunits MT-CO1, MT-CO2 and MT-CO3, encoded in the mitochondrial DNA, and 11 supernumerary subunits COX4I, COX5A, COX5B, COX6A, COX6B, COX6C, COX7A, COX7B, COX7C, COX8 and NDUFA4, which are encoded in the nuclear genome. The complex exists as a monomer or a dimer and forms supercomplexes (SCs) in the inner mitochondrial membrane with NADH-ubiquinone oxidoreductase (complex I, CI) and ubiquinol-cytochrome c oxidoreductase (cytochrome b-c1 complex, complex III, CIII), resulting in different assemblies (supercomplex SCI(1)III(2)IV(1) and megacomplex MCI(2)III(2)IV(2)). Found in a complex with TMEM177, COA6, COX18, COX20, SCO1 and SCO2. Interacts with TMEM177 in a COX20-dependent manner. Interacts with COX20. Interacts with COX16. Cu cation serves as cofactor.

The protein localises to the mitochondrion inner membrane. The catalysed reaction is 4 Fe(II)-[cytochrome c] + O2 + 8 H(+)(in) = 4 Fe(III)-[cytochrome c] + 2 H2O + 4 H(+)(out). Component of the cytochrome c oxidase, the last enzyme in the mitochondrial electron transport chain which drives oxidative phosphorylation. The respiratory chain contains 3 multisubunit complexes succinate dehydrogenase (complex II, CII), ubiquinol-cytochrome c oxidoreductase (cytochrome b-c1 complex, complex III, CIII) and cytochrome c oxidase (complex IV, CIV), that cooperate to transfer electrons derived from NADH and succinate to molecular oxygen, creating an electrochemical gradient over the inner membrane that drives transmembrane transport and the ATP synthase. Cytochrome c oxidase is the component of the respiratory chain that catalyzes the reduction of oxygen to water. Electrons originating from reduced cytochrome c in the intermembrane space (IMS) are transferred via the dinuclear copper A center (CU(A)) of subunit 2 and heme A of subunit 1 to the active site in subunit 1, a binuclear center (BNC) formed by heme A3 and copper B (CU(B)). The BNC reduces molecular oxygen to 2 water molecules using 4 electrons from cytochrome c in the IMS and 4 protons from the mitochondrial matrix. The polypeptide is Cytochrome c oxidase subunit 2 (MT-CO2) (Cheirogaleus medius (Fat-tailed dwarf lemur)).